A 242-amino-acid polypeptide reads, in one-letter code: Leucyl/phenylalanyl-tRNA--protein transferase (242 aa).

This sequence belongs to the L/F-transferase family.

The protein localises to the cytoplasm. It catalyses the reaction N-terminal L-lysyl-[protein] + L-leucyl-tRNA(Leu) = N-terminal L-leucyl-L-lysyl-[protein] + tRNA(Leu) + H(+). The catalysed reaction is N-terminal L-arginyl-[protein] + L-leucyl-tRNA(Leu) = N-terminal L-leucyl-L-arginyl-[protein] + tRNA(Leu) + H(+). The enzyme catalyses L-phenylalanyl-tRNA(Phe) + an N-terminal L-alpha-aminoacyl-[protein] = an N-terminal L-phenylalanyl-L-alpha-aminoacyl-[protein] + tRNA(Phe). Functionally, functions in the N-end rule pathway of protein degradation where it conjugates Leu, Phe and, less efficiently, Met from aminoacyl-tRNAs to the N-termini of proteins containing an N-terminal arginine or lysine. The polypeptide is Leucyl/phenylalanyl-tRNA--protein transferase (Alcanivorax borkumensis (strain ATCC 700651 / DSM 11573 / NCIMB 13689 / SK2)).